The chain runs to 416 residues: UDP-N-acetylmuramoylalanine--D-glutamate ligase (416 aa).

108-114 lines the ATP pocket; sequence GTTGKTT.

It belongs to the MurCDEF family.

Its subcellular location is the cytoplasm. It catalyses the reaction UDP-N-acetyl-alpha-D-muramoyl-L-alanine + D-glutamate + ATP = UDP-N-acetyl-alpha-D-muramoyl-L-alanyl-D-glutamate + ADP + phosphate + H(+). The protein operates within cell wall biogenesis; peptidoglycan biosynthesis. Its function is as follows. Cell wall formation. Catalyzes the addition of glutamate to the nucleotide precursor UDP-N-acetylmuramoyl-L-alanine (UMA). This chain is UDP-N-acetylmuramoylalanine--D-glutamate ligase, found in Chlamydia trachomatis serovar L2 (strain ATCC VR-902B / DSM 19102 / 434/Bu).